Reading from the N-terminus, the 406-residue chain is NADH-quinone oxidoreductase subunit D (406 aa).

Belongs to the complex I 49 kDa subunit family. In terms of assembly, NDH-1 is composed of 14 different subunits. Subunits NuoB, C, D, E, F, and G constitute the peripheral sector of the complex.

The protein resides in the cell inner membrane. The catalysed reaction is a quinone + NADH + 5 H(+)(in) = a quinol + NAD(+) + 4 H(+)(out). In terms of biological role, NDH-1 shuttles electrons from NADH, via FMN and iron-sulfur (Fe-S) centers, to quinones in the respiratory chain. The immediate electron acceptor for the enzyme in this species is believed to be ubiquinone. Couples the redox reaction to proton translocation (for every two electrons transferred, four hydrogen ions are translocated across the cytoplasmic membrane), and thus conserves the redox energy in a proton gradient. The polypeptide is NADH-quinone oxidoreductase subunit D (Acidiphilium cryptum (strain JF-5)).